Reading from the N-terminus, the 131-residue chain is Large ribosomal subunit protein bL17 (131 aa).

This sequence belongs to the bacterial ribosomal protein bL17 family. Part of the 50S ribosomal subunit. Contacts protein L32.

The sequence is that of Large ribosomal subunit protein bL17 from Shewanella sp. (strain ANA-3).